Consider the following 149-residue polypeptide: Calmodulin (149 aa).

Ala-2 carries the post-translational modification N-acetylalanine. 4 EF-hand domains span residues 8 to 43, 44 to 79, 81 to 116, and 117 to 149; these read EQIA…LGQN, PTEA…KMKD, DSEE…LGEK, and LTDE…MMAK. Ca(2+) is bound by residues Asp-21, Asp-23, Asp-25, Cys-27, Glu-32, Asp-57, Asp-59, Asn-61, Thr-63, Glu-68, Asp-94, Asp-96, Asp-98, and Glu-105. The residue at position 116 (Lys-116) is an N6,N6,N6-trimethyllysine. The Ca(2+) site is built by Asp-130, Asp-132, Asp-134, Gln-136, and Glu-141.

The protein belongs to the calmodulin family.

In terms of biological role, calmodulin mediates the control of a large number of enzymes, ion channels and other proteins by Ca(2+). Among the enzymes to be stimulated by the calmodulin-Ca(2+) complex are a number of protein kinases and phosphatases. This is Calmodulin from Triticum aestivum (Wheat).